Reading from the N-terminus, the 251-residue chain is 3-isopropylmalate dehydratase small subunit 1 (251 aa).

The transit peptide at M1–R59 directs the protein to the chloroplast.

This sequence belongs to the LeuD family. Heterodimer of the large LEUC/IIL1 subunit and the small LEUD (SSU1, SSU2 or SSU3) subunits. As to expression, expressed at low levels in roots, root tips, at the basis of the hypocotyls, and in emerging leaves. In young seedlings, expressed in cotyledon epidermal cells. In hypocotyls, expressed in peripheral cells. In seedling roots, expressed in the epidermis, including root hairs, and throughout the cortex. In rosette leaves, expressed in the upper and lower epidermis. In roots of adult plants, expressed in the root tips and cortex of the mature root enclosing the stele. In flowering stalks, expressed in the epidermis. Expressed in the carpel epidermis.

Its subcellular location is the plastid. The protein localises to the chloroplast stroma. It catalyses the reaction (2R,3S)-3-isopropylmalate = (2S)-2-isopropylmalate. Its pathway is amino-acid biosynthesis; L-leucine biosynthesis; L-leucine from 3-methyl-2-oxobutanoate: step 2/4. In terms of biological role, catalyzes the isomerization between 2-isopropylmalate and 3-isopropylmalate, via the formation of 2-isopropylmaleate. Plays an essential role in leucine biosynthesis. Functions in both the biosynthesis of leucine, and in the methionine chain elongation pathway of aliphatic glucosinolate formation. Plays an essential role in female gametophyte development. This Arabidopsis thaliana (Mouse-ear cress) protein is 3-isopropylmalate dehydratase small subunit 1.